Reading from the N-terminus, the 435-residue chain is Chromosomal replication initiator protein DnaA (435 aa).

The interval 1–70 (MNIGEKILLL…KHLFEIQNSI (70 aa)) is domain I, interacts with DnaA modulators. The tract at residues 70 to 98 (IKVDVSILLKNQVESKKAEQKSVQKQQHS) is domain II. The interval 99 to 313 (LLNPSHTFEN…GILSKLHAYS (215 aa)) is domain III, AAA+ region. Positions 143, 145, 146, and 147 each coordinate ATP. Positions 314–435 (QLMHVDIDLQ…ELTNKITSSS (122 aa)) are domain IV, binds dsDNA.

It belongs to the DnaA family. In terms of assembly, oligomerizes as a right-handed, spiral filament on DNA at oriC.

The protein resides in the cytoplasm. Its function is as follows. Plays an essential role in the initiation and regulation of chromosomal replication. ATP-DnaA binds to the origin of replication (oriC) to initiate formation of the DNA replication initiation complex once per cell cycle. Binds the DnaA box (a 9 base pair repeat at the origin) and separates the double-stranded (ds)DNA. Forms a right-handed helical filament on oriC DNA; dsDNA binds to the exterior of the filament while single-stranded (ss)DNA is stabiized in the filament's interior. The ATP-DnaA-oriC complex binds and stabilizes one strand of the AT-rich DNA unwinding element (DUE), permitting loading of DNA polymerase. After initiation quickly degrades to an ADP-DnaA complex that is not apt for DNA replication. Binds acidic phospholipids. In Sulfurimonas denitrificans (strain ATCC 33889 / DSM 1251) (Thiomicrospira denitrificans (strain ATCC 33889 / DSM 1251)), this protein is Chromosomal replication initiator protein DnaA.